Consider the following 203-residue polypeptide: CCG-binding protein 1 (203 aa).

A disordered region spans residues 156 to 178 (IPDGLPKSEQELEEEEKSKMPDS). Residues 161 to 175 (PKSEQELEEEEKSKM) show a composition bias toward basic and acidic residues.

As to quaternary structure, homotetramer. Interacts with MEE12/CCG, MED7A, MED7B, MED9, AGL49, AGL53, AGL75, AGL80, AGL81, AGL82, AGL103 and NRPB1 (via CTD). In terms of tissue distribution, expressed in roots, leaves, stems and flowers. Expressed in the central cell of mature ovules.

It is found in the nucleus. The protein resides in the cytoplasm. Its function is as follows. Required for the development of the one-cell zygote and endosperm in embryos. Required for micropylar pollen tube guidance, but has no effect on ovule development and gametophytic cell fate specification. May connect transcription factors and the Pol II machinery to regulate pollen tube attraction, via its interactions with AGAMOUS-like (AGL) transcription factors, MEE14/CCG and the Mediator complex. This Arabidopsis thaliana (Mouse-ear cress) protein is CCG-binding protein 1.